A 400-amino-acid polypeptide reads, in one-letter code: Phosphoglycerate kinase (400 aa).

Residues 24–26, R40, 63–66, R121, and R154 contribute to the substrate site; these read DFN and HFGR. ATP contacts are provided by residues K205, G296, E327, and 356-359; that span reads GGDS.

It belongs to the phosphoglycerate kinase family. In terms of assembly, monomer.

The protein resides in the cytoplasm. The catalysed reaction is (2R)-3-phosphoglycerate + ATP = (2R)-3-phospho-glyceroyl phosphate + ADP. It participates in carbohydrate degradation; glycolysis; pyruvate from D-glyceraldehyde 3-phosphate: step 2/5. The polypeptide is Phosphoglycerate kinase (Thermosynechococcus vestitus (strain NIES-2133 / IAM M-273 / BP-1)).